Here is a 970-residue protein sequence, read N- to C-terminus: Sodium/calcium exchanger 1 (970 aa).

Residues 1–32 (MLQFSLSPTLSMGFHVIAMVALLFSHVDHISA) form the signal peptide. At 33-71 (ETEMEGEGNETGECTGSYYCKKGVILPIWEPQDPSFGDK) the chain is on the extracellular side. N41 is a glycosylation site (N-linked (GlcNAc...) asparagine). The helical transmembrane segment at 72 to 92 (IARATVYFVAMVYMFLGVSII) threads the bilayer. Residues 93–133 (ADRFMSSIEVITSQEKEITIKKPNGETTKTTVRIWNETVSN) are Cytoplasmic-facing. A helical transmembrane segment spans residues 134 to 154 (LTLMALGSSAPEILLSVIEVC). The Alpha-1 repeat unit spans residues 138 to 178 (ALGSSAPEILLSVIEVCGHNFTAGDLGPSTIVGSAAFNMFI). Topologically, residues 155 to 167 (GHNFTAGDLGPST) are extracellular. N157 is a glycosylation site (N-linked (GlcNAc...) asparagine). A helical membrane pass occupies residues 168 to 188 (IVGSAAFNMFIIIALCVYVVP). Topologically, residues 189-201 (DGETRKIKHLRVF) are cytoplasmic. A helical membrane pass occupies residues 202–222 (FVTAAWSIFAYTWLYIILSVS). At 223-228 (SPGVVE) the chain is on the extracellular side. A helical membrane pass occupies residues 229-249 (VWEGLLTFFFFPICVVFAWVA). Topologically, residues 250 to 797 (DRRLLFYKYV…FVPPTEYWNG (548 aa)) are cytoplasmic. The tract at residues 251–270 (RRLLFYKYVYKRYRAGKQRG) is putative calmodulin-binding region. Phosphoserine occurs at positions 282 and 389. Calx-beta domains are found at residues 393–493 (VNTE…VHLS) and 524–624 (ATVT…LEIG). Positions 417, 453, 478, 479, 481, 483, 486, 530, 531, 532, 548, 584, 610, 611, 612, and 715 each coordinate Ca(2+). The helical transmembrane segment at 798–818 (WACFIVSILMIGLLTAFIGDL) threads the bilayer. The Extracellular segment spans residues 819–821 (ASH). Residues 822-842 (FACTIALKDSVTAVVFVALGT) form a helical membrane-spanning segment. One copy of the Alpha-2 repeat lies at 839–875 (ALGTSVPDTFASKVAATQDQYADASIGNVTGSNAVNV). Residues 843–871 (SVPDTFASKVAATQDQYADASIGNVTGSN) lie on the Cytoplasmic side of the membrane. A helical membrane pass occupies residues 872–892 (AVNVFLGIGVAWSIAAIYHAA). The Extracellular segment spans residues 893–903 (NGEQFKVSPGT). Residues 904–924 (LAFSVTLFTIFAFINVGVLLY) form a helical membrane-spanning segment. The Cytoplasmic segment spans residues 925–941 (RRRPEIGGELGGPRTAK). A helical membrane pass occupies residues 942-962 (LLTSCLFVLLWLLYIFFSSLE). Residues 963–970 (AYCHIKGF) are Extracellular-facing.

Belongs to the Ca(2+):cation antiporter (CaCA) (TC 2.A.19) family. SLC8 subfamily.

It is found in the cell membrane. The enzyme catalyses Ca(2+)(in) + 3 Na(+)(out) = Ca(2+)(out) + 3 Na(+)(in). Activated by micromolar levels of Ca(2+). In terms of biological role, mediates the exchange of one Ca(2+) ion against three to four Na(+) ions across the cell membrane, and thereby contributes to the regulation of cytoplasmic Ca(2+) levels and Ca(2+)-dependent cellular processes. Contributes to Ca(2+) transport during excitation-contraction coupling in muscle. In a first phase, voltage-gated channels mediate the rapid increase of cytoplasmic Ca(2+) levels due to release of Ca(2+) stores from the endoplasmic reticulum. SLC8A1 mediates the export of Ca(2+) from the cell during the next phase, so that cytoplasmic Ca(2+) levels rapidly return to baseline. Required for normal embryonic heart development and the onset of heart contractions. In Bos taurus (Bovine), this protein is Sodium/calcium exchanger 1 (SLC8A1).